The chain runs to 279 residues: Complement component 1 Q subcomponent-binding protein, mitochondrial (279 aa).

A mitochondrion-targeting transit peptide spans 1–71; that stretch reads MLPLLRCVPR…PVPCACGCGA (71 aa). The tract at residues 74–91 is C1q binding; the sequence is TEGDKAFVEFLTDEIKEE. N6-acetyllysine is present on residues Lys-89 and Lys-92. Residues 134-162 form a disordered region; it reads NNSIPPTFDGEEEPSQGQKAEEQEPELTS. Residues 166–210 form an interaction with MAVS region; sequence FVVEVTKTDGKKTLVLDCHYPEDEIGHEDEAESDIFSIKEVSFQT. The residue at position 185 (Tyr-185) is a Phosphotyrosine. Residues Ser-198 and Ser-202 each carry the phosphoserine modification. Thr-211 bears the Phosphothreonine mark.

It belongs to the MAM33 family. Homotrimer; three monomers form a donut-shaped structure with an unusually asymmetric charge distribution on the surface. Interacts with CDK13, HRK, VTN, NFYB, ADRA1B, FOXC1, DDX21, DDX50, NCL, SRSF1 and SRSF9. Interacts with CD93; the association may represent a cell surface C1q receptor. Interacts with KRT1; the association represents a cell surface kininogen receptor. Interacts with CD209; the interaction is indicative for a C1q:C1QBP:CD209 signaling complex. Interacts with FBL and RRP1; the respective interactions with C1QBP are competitive. Probably associates with the mitoribosome. Interacts with MAVS; the interaction occurs upon viral transfection. Interacts with PPIF. Interacts with U2AF1L4. Interacts with PLEKHN1. Interacts with VGF-derived peptide TLQP-21. Interacts with MRE11 and RAD50; forming the MRC (MRE11-RAD50-C1QBP) complex that inhibits the activity of MRE11. Ubiquitous.

The protein resides in the mitochondrion matrix. It is found in the nucleus. It localises to the cell membrane. The protein localises to the secreted. Its subcellular location is the cytoplasm. The protein resides in the nucleolus. Multifunctional and multicompartmental protein involved in inflammation and infection processes, ribosome biogenesis, protein synthesis in mitochondria, regulation of apoptosis, transcriptional regulation and pre-mRNA splicing. At the cell surface is thought to act as an endothelial receptor for plasma proteins of the complement and kallikrein-kinin cascades. Putative receptor for C1q; specifically binds to the globular 'heads' of C1q thus inhibiting C1; may perform the receptor function through a complex with C1qR/CD93. In complex with cytokeratin-1/KRT1 is a high affinity receptor for kininogen-1/HMWK. Can also bind other plasma proteins, such as coagulation factor XII leading to its autoactivation. May function to bind initially fluid kininogen-1 to the cell membrane. The secreted form may enhance both extrinsic and intrinsic coagulation pathways. It is postulated that the cell surface form requires docking with transmembrane proteins for downstream signaling which might be specific for a cell-type or response. By acting as C1q receptor is involved in chemotaxis of immature dendritic cells and neutrophils and is proposed to signal through CD209/DC-SIGN on immature dendritic cells, through integrin alpha-4/beta-1 during trophoblast invasion of the decidua, and through integrin beta-1 during endothelial cell adhesion and spreading. Signaling involved in inhibition of innate immune response is implicating the PI3K-AKT/PKB pathway. Required for protein synthesis in mitochondria. In mitochondrial translation may be involved in formation of functional 55S mitoribosomes; the function seems to involve its RNA-binding activity. Acts as a RNA modification reader, which specifically recognizes and binds mitochondrial RNAs modified by C5-methylcytosine (m5C) in response to stress, and promotes recruitment of the mitochondrial degradosome complex, leading to their degradation. May be involved in the nucleolar ribosome maturation process; the function may involve the exchange of FBL for RRP1 in the association with pre-ribosome particles. Involved in regulation of RNA splicing by inhibiting the RNA-binding capacity of SRSF1 and its phosphorylation. Is required for the nuclear translocation of splicing factor U2AF1L4. Involved in regulation of CDKN2A- and HRK-mediated apoptosis. Stabilizes mitochondrial CDKN2A isoform smARF. May be involved in regulation of FOXC1 transcriptional activity and NFY/CCAAT-binding factor complex-mediated transcription. May play a role in antibacterial defense as it can bind to cell surface hyaluronan and inhibit Streptococcus pneumoniae hyaluronate lyase. May be involved in modulation of the immune response; ligation by HCV core protein is resulting in suppression of interleukin-12 production in monocyte-derived dendritic cells. Involved in regulation of antiviral response by inhibiting RIGI- and IFIH1-mediated signaling pathways probably involving its association with MAVS after viral infection. Acts as a regulator of DNA repair via homologous recombination by inhibiting the activity of MRE11: interacts with unphosphorylated MRE11 and RAD50 in absence of DNA damage, preventing formation and activity of the MRN complex. Following DNA damage, dissociates from phosphorylated MRE11, allowing formation of the MRN complex. This is Complement component 1 Q subcomponent-binding protein, mitochondrial (C1qbp) from Rattus norvegicus (Rat).